We begin with the raw amino-acid sequence, 96 residues long: Acylphosphatase (96 aa).

In terms of domain architecture, Acylphosphatase-like spans 9–96; that stretch reads CAEIYVSGRV…DTFTDFFIKR (88 aa). Active-site residues include Arg-24 and Asn-42.

Belongs to the acylphosphatase family.

The enzyme catalyses an acyl phosphate + H2O = a carboxylate + phosphate + H(+). This is Acylphosphatase (acyP) from Methanococcoides burtonii (strain DSM 6242 / NBRC 107633 / OCM 468 / ACE-M).